A 218-amino-acid polypeptide reads, in one-letter code: Small ribosomal subunit protein uS3c (218 aa).

Positions 47-118 (IRRHMRSSSN…KLNIAIVKVA (72 aa)) constitute a KH type-2 domain.

The protein belongs to the universal ribosomal protein uS3 family. In terms of assembly, part of the 30S ribosomal subunit.

It is found in the plastid. The protein resides in the chloroplast. The sequence is that of Small ribosomal subunit protein uS3c (rps3) from Cycas taitungensis (Prince sago).